A 265-amino-acid chain; its full sequence is MTTVVFKVGGSVLNQLSPKFYQVLLQLKETGTCNPIIVHGGGPEINEALSKMNIKTEFVDGLRVTSEEVLSIAEMVMSGTINKRIVSSIQSIGGNALGLSGVDGKLLRAKQMHDGKLGLVGEVVEVNTEWLSIIMNSGGIPVISPIAIGDADKRYNVNGDMAAGAVAEAFQSKLILVSNIPGVIESVNGEEIIHHHLTKQQVESKIDSGVIYGGMIPKVRSALASLKSGVAESVILNGLNPIEIKNYLEGKTVGTVLTEREVEHV.

Residues 41 to 42 (GG), Arg-63, and Asn-156 contribute to the substrate site.

Belongs to the acetylglutamate kinase family. ArgB subfamily.

The protein localises to the cytoplasm. It carries out the reaction N-acetyl-L-glutamate + ATP = N-acetyl-L-glutamyl 5-phosphate + ADP. It participates in amino-acid biosynthesis; L-arginine biosynthesis; N(2)-acetyl-L-ornithine from L-glutamate: step 2/4. In terms of biological role, catalyzes the ATP-dependent phosphorylation of N-acetyl-L-glutamate. The sequence is that of Acetylglutamate kinase from Oceanobacillus iheyensis (strain DSM 14371 / CIP 107618 / JCM 11309 / KCTC 3954 / HTE831).